A 602-amino-acid chain; its full sequence is UvrABC system protein C (602 aa).

The 78-residue stretch at 15 to 92 folds into the GIY-YIG domain; it reads DLPGSYQMKD…IQKYQPYYNI (78 aa). The 36-residue stretch at 197–232 folds into the UVR domain; the sequence is GKAKASLTAKMERAAKNLQFERAAEIRDQLHYIEQT.

It belongs to the UvrC family. In terms of assembly, interacts with UvrB in an incision complex.

The protein localises to the cytoplasm. In terms of biological role, the UvrABC repair system catalyzes the recognition and processing of DNA lesions. UvrC both incises the 5' and 3' sides of the lesion. The N-terminal half is responsible for the 3' incision and the C-terminal half is responsible for the 5' incision. In Lacticaseibacillus casei (strain BL23) (Lactobacillus casei), this protein is UvrABC system protein C.